Here is a 373-residue protein sequence, read N- to C-terminus: Ribosomal RNA small subunit methyltransferase H (373 aa).

S-adenosyl-L-methionine contacts are provided by residues 92–94 (GGH), D111, Y138, D159, and Q166. 2 stretches are compositionally biased toward basic and acidic residues: residues 343–355 (AERADEQEIERNP) and 363–373 (RALEKVGGRGS). The disordered stretch occupies residues 343 to 373 (AERADEQEIERNPRSAPVRLRALEKVGGRGS).

Belongs to the methyltransferase superfamily. RsmH family.

Its subcellular location is the cytoplasm. The catalysed reaction is cytidine(1402) in 16S rRNA + S-adenosyl-L-methionine = N(4)-methylcytidine(1402) in 16S rRNA + S-adenosyl-L-homocysteine + H(+). Functionally, specifically methylates the N4 position of cytidine in position 1402 (C1402) of 16S rRNA. This Mycolicibacterium smegmatis (strain ATCC 700084 / mc(2)155) (Mycobacterium smegmatis) protein is Ribosomal RNA small subunit methyltransferase H.